A 64-amino-acid chain; its full sequence is Conotoxin Pn-B01121 (64 aa).

The signal sequence occupies residues 1-22 (MCCLPVFVILLLLIASAPSVDA). Positions 23–48 (LPKTKDDMSLASFHDNAKRTLQILSN) are excised as a propeptide. Trp-63 bears the Tryptophan amide mark.

This sequence belongs to the conotoxin T superfamily. Post-translationally, contains 2 disulfide bonds that can be either 'C1-C3, C2-C4' or 'C1-C4, C2-C3', since these disulfide connectivities have been observed for conotoxins with cysteine framework V (for examples, see AC P0DQQ7 and AC P81755). Expressed by the venom duct.

It localises to the secreted. This Conus pennaceus (Feathered cone) protein is Conotoxin Pn-B01121.